The chain runs to 120 residues: Flagellar transcriptional regulator FlhD (120 aa).

It belongs to the FlhD family. Homodimer; disulfide-linked. Forms a heterohexamer composed of two FlhC and four FlhD subunits. Each FlhC binds a FlhD dimer, forming a heterotrimer, and a hexamer assembles by dimerization of two heterotrimers.

The protein localises to the cytoplasm. Functionally, functions in complex with FlhC as a master transcriptional regulator that regulates transcription of several flagellar and non-flagellar operons by binding to their promoter region. Activates expression of class 2 flagellar genes, including fliA, which is a flagellum-specific sigma factor that turns on the class 3 genes. Also regulates genes whose products function in a variety of physiological pathways. This chain is Flagellar transcriptional regulator FlhD, found in Erwinia tasmaniensis (strain DSM 17950 / CFBP 7177 / CIP 109463 / NCPPB 4357 / Et1/99).